The primary structure comprises 323 residues: Global nitrogen regulator NrpRI (323 aa).

The interval isoleucine 11–methionine 76 is winged helix-turn-helix. The segment at glycine 86 to isoleucine 323 is NRD.

Belongs to the NrpR family. In terms of assembly, forms a complex with NrpRII and the general archaeal transcription factors TBP and TFB. Interacts directly with NrpRII.

Its activity is regulated as follows. Under nitrogen limitation, binding of 2-oxoglutarate to the NrpRI/NrpRII complex decreases the binding affinity of NrpRI to DNA as well as the binding affinity of NrpRII to TBP and TFB, which leads to removal of the complex from the operator, RNA polymerase recruitment and initiation of transcription. Plays a major role in nitrogen regulation. Under nitrogen sufficiency, binds to the nifH and the glnk1 promoters, leading to repression of the transcription of the genes. In Methanosarcina mazei (strain ATCC BAA-159 / DSM 3647 / Goe1 / Go1 / JCM 11833 / OCM 88) (Methanosarcina frisia), this protein is Global nitrogen regulator NrpRI.